We begin with the raw amino-acid sequence, 418 residues long: cAMP-dependent protein kinase type II-beta regulatory subunit (418 aa).

Positions 2-153 (SIEIPAGLTE…RLQEACKDIL (152 aa)) are dimerization and phosphorylation. Over residues 45–57 (RKGTARFGHEGRT) the composition is skewed to basic and acidic residues. The disordered stretch occupies residues 45 to 98 (RKGTARFGHEGRTWGDAGAAGGGGTPSKGVNFAEEPRHSDSENGEEEEEEAADA). Residue threonine 69 is modified to Phosphothreonine. Serine 83 and serine 85 each carry phosphoserine. Positions 86-96 (ENGEEEEEEAA) are enriched in acidic residues. Phosphoserine is present on serine 114. Residues 154 to 275 (LFKN…ESLP), glutamate 223, arginine 232, 276 to 418 (FLKS…EPTA), glutamate 352, and arginine 361 each bind 3',5'-cyclic AMP.

This sequence belongs to the cAMP-dependent kinase regulatory chain family. The inactive form of the enzyme is composed of two regulatory chains and two catalytic chains. Activation by cAMP produces two active catalytic monomers and a regulatory dimer that binds four cAMP molecules. Interacts with PRKACA and PRKACB. Interacts with the phosphorylated form of PJA2. Forms a complex composed of PRKAR2B, GSK3B and GSKIP through GSKIP interaction; facilitates PKA-induced phosphorylation and regulates GSK3B activity. Phosphorylated by the activated catalytic chain. As to expression, four types of regulatory chains are found: I-alpha, I-beta, II-alpha, and II-beta. Their expression varies among tissues and is in some cases constitutive and in others inducible.

The protein resides in the cytoplasm. It is found in the cell membrane. Regulatory subunit of the cAMP-dependent protein kinases involved in cAMP signaling in cells. Type II regulatory chains mediate membrane association by binding to anchoring proteins, including the MAP2 kinase. The polypeptide is cAMP-dependent protein kinase type II-beta regulatory subunit (PRKAR2B) (Bos taurus (Bovine)).